We begin with the raw amino-acid sequence, 175 residues long: Co-chaperone protein HscB homolog (175 aa).

The 73-residue stretch at 8 to 80 (DFFSLFGLPR…LNRARYLLQL (73 aa)) folds into the J domain.

The protein belongs to the HscB family. Interacts with HscA and stimulates its ATPase activity.

Functionally, co-chaperone involved in the maturation of iron-sulfur cluster-containing proteins. Seems to help targeting proteins to be folded toward HscA. The polypeptide is Co-chaperone protein HscB homolog (Chromobacterium violaceum (strain ATCC 12472 / DSM 30191 / JCM 1249 / CCUG 213 / NBRC 12614 / NCIMB 9131 / NCTC 9757 / MK)).